Here is a 108-residue protein sequence, read N- to C-terminus: MSDSNSRLVYSTETGRIDEPKAAPVRPKGDGVVRIQRQTSGRKGKGVCLITGVDLDDAELTKLAAELKKKCGCGGAVKDGVIEIQGDKRDLLKSLLEAKGMKVKLAGG.

A compositionally biased stretch (polar residues) spans 1–14 (MSDSNSRLVYSTET). The segment at 1–31 (MSDSNSRLVYSTETGRIDEPKAAPVRPKGDG) is disordered. The span at 15-31 (GRIDEPKAAPVRPKGDG) shows a compositional bias: basic and acidic residues.

It belongs to the SUI1 family.

This is an uncharacterized protein from Escherichia coli (strain K12).